Here is an 87-residue protein sequence, read N- to C-terminus: Putative sodium channel toxin Ts38 (87 aa).

Residues 1 to 22 (MKHLKFYSILFLFSIFVYKVNA) form the signal peptide. Intrachain disulfides connect Cys42/Cys65, Cys51/Cys72, and Cys55/Cys74.

It belongs to the long (3 C-C) scorpion toxin superfamily. Sodium channel inhibitor family. Expressed by the venom gland.

Its subcellular location is the secreted. Its function is as follows. Putative sodium channel toxin. This Tityus serrulatus (Brazilian scorpion) protein is Putative sodium channel toxin Ts38.